A 600-amino-acid chain; its full sequence is 1-deoxy-D-xylulose-5-phosphate synthase (600 aa).

Thiamine diphosphate is bound by residues His63 and 104 to 106 (GHS). Asp135 is a Mg(2+) binding site. Thiamine diphosphate-binding positions include 136–137 (GA), Asn164, Tyr271, and Glu352. A Mg(2+)-binding site is contributed by Asn164.

It belongs to the transketolase family. DXPS subfamily. In terms of assembly, homodimer. Mg(2+) serves as cofactor. Requires thiamine diphosphate as cofactor.

The enzyme catalyses D-glyceraldehyde 3-phosphate + pyruvate + H(+) = 1-deoxy-D-xylulose 5-phosphate + CO2. The protein operates within metabolic intermediate biosynthesis; 1-deoxy-D-xylulose 5-phosphate biosynthesis; 1-deoxy-D-xylulose 5-phosphate from D-glyceraldehyde 3-phosphate and pyruvate: step 1/1. Its function is as follows. Catalyzes the acyloin condensation reaction between C atoms 2 and 3 of pyruvate and glyceraldehyde 3-phosphate to yield 1-deoxy-D-xylulose-5-phosphate (DXP). In Campylobacter fetus subsp. fetus (strain 82-40), this protein is 1-deoxy-D-xylulose-5-phosphate synthase.